A 185-amino-acid chain; its full sequence is Putative tyrosine-protein phosphatase OCA1 (185 aa).

Residues N18–S178 enclose the Tyrosine-protein phosphatase domain. C116 functions as the Phosphocysteine intermediate in the catalytic mechanism.

It belongs to the protein-tyrosine phosphatase family.

It localises to the cytoplasm. It carries out the reaction O-phospho-L-tyrosyl-[protein] + H2O = L-tyrosyl-[protein] + phosphate. Putative tyrosine-protein phosphatase required for protection against superoxide stress. This is Putative tyrosine-protein phosphatase OCA1 (OCA1) from Meyerozyma guilliermondii (strain ATCC 6260 / CBS 566 / DSM 6381 / JCM 1539 / NBRC 10279 / NRRL Y-324) (Yeast).